The primary structure comprises 113 residues: U11-theraphotoxin-Hhn1u (113 aa).

Residues 1–21 (MNTVRVTFLLVFVLAVSLGQA) form the signal peptide. A propeptide spanning residues 22-74 (DKDENRMEMQEKTEQGKSYLDFAENLLLQKLEELEAKLLEEDSEESRNSRQKR) is cleaved from the precursor. 3 disulfides stabilise this stretch: Cys-75-Cys-90, Cys-82-Cys-95, and Cys-89-Cys-110.

Belongs to the neurotoxin 14 (magi-1) family. 01 (HNTX-16) subfamily. Expressed by the venom gland.

The protein localises to the secreted. Functionally, probable ion channel inhibitor. In Cyriopagopus hainanus (Chinese bird spider), this protein is U11-theraphotoxin-Hhn1u.